The sequence spans 302 residues: Oxygen-dependent coproporphyrinogen-III oxidase (302 aa).

Ser-94 serves as a coordination point for substrate. His-98 and His-108 together coordinate a divalent metal cation. The Proton donor role is filled by His-108. Residue 110-112 coordinates substrate; it reads NVR. A divalent metal cation contacts are provided by His-147 and His-177. The tract at residues 242-277 is important for dimerization; that stretch reads YVEFNLVYDRGTLFGLQTGGRTESILMSMPPLVRWQ. 260–262 provides a ligand contact to substrate; it reads GGR.

The protein belongs to the aerobic coproporphyrinogen-III oxidase family. As to quaternary structure, homodimer. The cofactor is a divalent metal cation.

It is found in the cytoplasm. The enzyme catalyses coproporphyrinogen III + O2 + 2 H(+) = protoporphyrinogen IX + 2 CO2 + 2 H2O. The protein operates within porphyrin-containing compound metabolism; protoporphyrin-IX biosynthesis; protoporphyrinogen-IX from coproporphyrinogen-III (O2 route): step 1/1. In terms of biological role, involved in the heme biosynthesis. Catalyzes the aerobic oxidative decarboxylation of propionate groups of rings A and B of coproporphyrinogen-III to yield the vinyl groups in protoporphyrinogen-IX. The polypeptide is Oxygen-dependent coproporphyrinogen-III oxidase (Shewanella baltica (strain OS155 / ATCC BAA-1091)).